The sequence spans 129 residues: Small ribosomal subunit protein uS11 (129 aa).

Belongs to the universal ribosomal protein uS11 family. As to quaternary structure, part of the 30S ribosomal subunit. Interacts with proteins S7 and S18. Binds to IF-3.

In terms of biological role, located on the platform of the 30S subunit, it bridges several disparate RNA helices of the 16S rRNA. Forms part of the Shine-Dalgarno cleft in the 70S ribosome. The protein is Small ribosomal subunit protein uS11 of Macrococcus caseolyticus (strain JCSC5402) (Macrococcoides caseolyticum).